The following is a 393-amino-acid chain: Leucine aminopeptidase 1 (393 aa).

A signal peptide spans methionine 1–alanine 18. A propeptide spanning residues arginine 19 to serine 84 is cleaved from the precursor. Asparagine 176 carries an N-linked (GlcNAc...) asparagine glycan. Zn(2+)-binding residues include histidine 184, aspartate 202, glutamate 241, and aspartate 268. Residues cysteine 317 and cysteine 321 are joined by a disulfide bond. Histidine 350 contacts Zn(2+).

Belongs to the peptidase M28 family. M28E subfamily. As to quaternary structure, monomer. Requires Zn(2+) as cofactor.

Its subcellular location is the secreted. Extracellular aminopeptidase that allows assimilation of proteinaceous substrates. The protein is Leucine aminopeptidase 1 (LAP1) of Metarhizium robertsii (strain ARSEF 23 / ATCC MYA-3075) (Metarhizium anisopliae (strain ARSEF 23)).